The sequence spans 280 residues: uncharacterized protein (280 aa).

The N-terminal 51 residues, Met1–Val51, are a transit peptide targeting the chloroplast.

This sequence belongs to the NAD(P)-dependent epimerase/dehydratase family.

The protein localises to the plastid. Its subcellular location is the chloroplast. The protein resides in the plastoglobule. This is an uncharacterized protein from Arabidopsis thaliana (Mouse-ear cress).